Here is a 205-residue protein sequence, read N- to C-terminus: MTRPYAPGYRIPTDLLLKAYASGVFPMAESASDPEVFWVRPETRGIIPLDGFHTPKSLRKTIRKSLFDIRFDFDFEATIDGCAEKREERRSTWINAPIREAYVQLHRMGHCHSVEAWREDQLVGGLYGVSLGRVFFGESMFSKETDASKICLVHLVERLKARGFALLDTQFTTEHLKRFGAVDVPRGKYEKMLAEALKGEAIFFP.

Belongs to the L/F-transferase family.

It is found in the cytoplasm. The catalysed reaction is N-terminal L-lysyl-[protein] + L-leucyl-tRNA(Leu) = N-terminal L-leucyl-L-lysyl-[protein] + tRNA(Leu) + H(+). It catalyses the reaction N-terminal L-arginyl-[protein] + L-leucyl-tRNA(Leu) = N-terminal L-leucyl-L-arginyl-[protein] + tRNA(Leu) + H(+). It carries out the reaction L-phenylalanyl-tRNA(Phe) + an N-terminal L-alpha-aminoacyl-[protein] = an N-terminal L-phenylalanyl-L-alpha-aminoacyl-[protein] + tRNA(Phe). Functionally, functions in the N-end rule pathway of protein degradation where it conjugates Leu, Phe and, less efficiently, Met from aminoacyl-tRNAs to the N-termini of proteins containing an N-terminal arginine or lysine. This Mesorhizobium japonicum (strain LMG 29417 / CECT 9101 / MAFF 303099) (Mesorhizobium loti (strain MAFF 303099)) protein is Leucyl/phenylalanyl-tRNA--protein transferase.